The primary structure comprises 560 residues: 2-succinyl-5-enolpyruvyl-6-hydroxy-3-cyclohexene-1-carboxylate synthase (560 aa).

This sequence belongs to the TPP enzyme family. MenD subfamily. As to quaternary structure, homodimer. Mg(2+) is required as a cofactor. The cofactor is Mn(2+). Requires thiamine diphosphate as cofactor.

The enzyme catalyses isochorismate + 2-oxoglutarate + H(+) = 5-enolpyruvoyl-6-hydroxy-2-succinyl-cyclohex-3-ene-1-carboxylate + CO2. The protein operates within quinol/quinone metabolism; 1,4-dihydroxy-2-naphthoate biosynthesis; 1,4-dihydroxy-2-naphthoate from chorismate: step 2/7. It participates in quinol/quinone metabolism; menaquinone biosynthesis. Its function is as follows. Catalyzes the thiamine diphosphate-dependent decarboxylation of 2-oxoglutarate and the subsequent addition of the resulting succinic semialdehyde-thiamine pyrophosphate anion to isochorismate to yield 2-succinyl-5-enolpyruvyl-6-hydroxy-3-cyclohexene-1-carboxylate (SEPHCHC). The sequence is that of 2-succinyl-5-enolpyruvyl-6-hydroxy-3-cyclohexene-1-carboxylate synthase from Pectobacterium atrosepticum (strain SCRI 1043 / ATCC BAA-672) (Erwinia carotovora subsp. atroseptica).